We begin with the raw amino-acid sequence, 237 residues long: CD63 antigen (237 aa).

Residues M1–K11 are Cytoplasmic-facing. A helical membrane pass occupies residues F12 to G32. At V33 to F51 the chain is on the extracellular side. A glycan (N-linked (GlcNAc...) asparagine) is linked at N40. A helical membrane pass occupies residues L52–C72. The Cytoplasmic segment spans residues C73–C81. A helical membrane pass occupies residues L82–I102. Residues A103–V202 are Extracellular-facing. N-linked (GlcNAc...) asparagine glycans are attached at residues N130, N150, and N171. The chain crosses the membrane as a helical span at residues L203–A223. The Cytoplasmic segment spans residues C224–M237. Residues G233 to M237 carry the Lysosomal targeting motif motif.

This sequence belongs to the tetraspanin (TM4SF) family. Interacts with TIMP1 and ITGB1 and recruits TIMP1 to ITGB1. Interacts with CD9. Identified in a complex with CD9 and ITGB3. Interacts with PMEL. Interacts with KDR/VEGFR2; identified in a complex with ITGB1 and KDR/VEGFR2 and is required to recruit KDR to ITGB1 complexes. Interacts with SYT7. Palmitoylated at a low, basal level in unstimulated platelets. The level of palmitoylation increases when platelets are activated by thrombin (in vitro).

It localises to the cell membrane. It is found in the lysosome membrane. The protein resides in the late endosome membrane. Its subcellular location is the endosome. The protein localises to the multivesicular body. It localises to the melanosome. It is found in the secreted. The protein resides in the extracellular exosome. Its subcellular location is the cell surface. Functionally, functions as a cell surface receptor for TIMP1 and plays a role in the activation of cellular signaling cascades. Plays a role in the activation of ITGB1 and integrin signaling, leading to the activation of AKT, FAK/PTK2 and MAP kinases. Promotes cell survival, reorganization of the actin cytoskeleton, cell adhesion, spreading and migration, via its role in the activation of AKT and FAK/PTK2. Plays a role in VEGFA signaling via its role in regulating the internalization of KDR/VEGFR2. Plays a role in intracellular vesicular transport processes, and is required for normal trafficking of the PMEL luminal domain that is essential for the development and maturation of melanocytes. Plays a role in the adhesion of leukocytes onto endothelial cells via its role in the regulation of SELP trafficking. May play a role in mast cell degranulation in response to Ms4a2/FceRI stimulation, but not in mast cell degranulation in response to other stimuli. The chain is CD63 antigen (CD63) from Bos taurus (Bovine).